We begin with the raw amino-acid sequence, 450 residues long: Tubulin alpha chain (450 aa).

GTP is bound at residue Gln11. Lys40 is modified (N6-acetyllysine). Glu71, Gly144, Thr145, Thr179, Asn206, and Asn228 together coordinate GTP. Glu71 lines the Mg(2+) pocket. Glu254 is a catalytic residue.

This sequence belongs to the tubulin family. As to quaternary structure, dimer of alpha and beta chains. A typical microtubule is a hollow water-filled tube with an outer diameter of 25 nm and an inner diameter of 15 nM. Alpha-beta heterodimers associate head-to-tail to form protofilaments running lengthwise along the microtubule wall with the beta-tubulin subunit facing the microtubule plus end conferring a structural polarity. Microtubules usually have 13 protofilaments but different protofilament numbers can be found in some organisms and specialized cells. It depends on Mg(2+) as a cofactor. In terms of processing, undergoes a tyrosination/detyrosination cycle, the cyclic removal and re-addition of a C-terminal tyrosine residue by the enzymes tubulin tyrosine carboxypeptidase (TTCP) and tubulin tyrosine ligase (TTL), respectively. Acetylation of alpha chains at Lys-40 stabilizes microtubules and affects affinity and processivity of microtubule motors. This modification has a role in multiple cellular functions, ranging from cell motility, cell cycle progression or cell differentiation to intracellular trafficking and signaling.

It localises to the cytoplasm. The protein localises to the cytoskeleton. The catalysed reaction is GTP + H2O = GDP + phosphate + H(+). Functionally, tubulin is the major constituent of microtubules, a cylinder consisting of laterally associated linear protofilaments composed of alpha- and beta-tubulin heterodimers. Microtubules grow by the addition of GTP-tubulin dimers to the microtubule end, where a stabilizing cap forms. Below the cap, tubulin dimers are in GDP-bound state, owing to GTPase activity of alpha-tubulin. In Prunus dulcis (Almond), this protein is Tubulin alpha chain (TUBA).